A 102-amino-acid polypeptide reads, in one-letter code: Small ribosomal subunit protein uS10 (102 aa).

This sequence belongs to the universal ribosomal protein uS10 family. In terms of assembly, part of the 30S ribosomal subunit.

Involved in the binding of tRNA to the ribosomes. This Gluconacetobacter diazotrophicus (strain ATCC 49037 / DSM 5601 / CCUG 37298 / CIP 103539 / LMG 7603 / PAl5) protein is Small ribosomal subunit protein uS10.